A 307-amino-acid polypeptide reads, in one-letter code: Protein YIF1A (307 aa).

The tract at residues 1–42 (MNFQQQGYRATKPRARASPPTGGPMLFDDTSSGPPPMNNQNY) is disordered. The Cytoplasmic segment spans residues 1–148 (MNFQQQGYRA…TPRHDVNAPD (148 aa)). A helical membrane pass occupies residues 149–169 (LYIPTMAFITYILLAGMALGI). At 170-184 (QKRFSPEVLGLCAST) the chain is on the lumenal side. The helical transmembrane segment at 185–205 (ALVWMIIEVLVMLLSLYLLTV) threads the bilayer. At 206–213 (HTDLSTFD) the chain is on the cytoplasmic side. The chain crosses the membrane as a helical span at residues 214–236 (LVAYSGYKYVGMILTVFCGLLFG). Over 237–239 (SDG) the chain is Lumenal. The chain crosses the membrane as a helical span at residues 240 to 259 (YYVALAWSSCALMFFIVRSL). The Cytoplasmic segment spans residues 260 to 285 (KMKILSSISADSMGAGASAKPRFRLY). Residues 286-306 (ITVASAAFQPFIIYWLTAHLV) traverse the membrane as a helical segment.

This sequence belongs to the YIF1 family.

The protein resides in the endoplasmic reticulum membrane. It is found in the golgi apparatus membrane. It localises to the endoplasmic reticulum-Golgi intermediate compartment membrane. Its function is as follows. Possible role in transport between endoplasmic reticulum and Golgi. The sequence is that of Protein YIF1A (yif1a) from Danio rerio (Zebrafish).